Here is a 111-residue protein sequence, read N- to C-terminus: Large ribosomal subunit protein uL22 (111 aa).

It belongs to the universal ribosomal protein uL22 family. Part of the 50S ribosomal subunit.

In terms of biological role, this protein binds specifically to 23S rRNA; its binding is stimulated by other ribosomal proteins, e.g. L4, L17, and L20. It is important during the early stages of 50S assembly. It makes multiple contacts with different domains of the 23S rRNA in the assembled 50S subunit and ribosome. The globular domain of the protein is located near the polypeptide exit tunnel on the outside of the subunit, while an extended beta-hairpin is found that lines the wall of the exit tunnel in the center of the 70S ribosome. The polypeptide is Large ribosomal subunit protein uL22 (Acholeplasma laidlawii).